The chain runs to 226 residues: Octanoyltransferase (226 aa).

The BPL/LPL catalytic domain occupies 37-220 (GTAGELIWLL…SFSKVFGPVE (184 aa)). Substrate-binding positions include 76–83 (RGGQFTYH), 151–153 (AIG), and 164–166 (GIS). The active-site Acyl-thioester intermediate is the Cys-182.

This sequence belongs to the LipB family.

The protein resides in the cytoplasm. The catalysed reaction is octanoyl-[ACP] + L-lysyl-[protein] = N(6)-octanoyl-L-lysyl-[protein] + holo-[ACP] + H(+). It participates in protein modification; protein lipoylation via endogenous pathway; protein N(6)-(lipoyl)lysine from octanoyl-[acyl-carrier-protein]: step 1/2. Its function is as follows. Catalyzes the transfer of endogenously produced octanoic acid from octanoyl-acyl-carrier-protein onto the lipoyl domains of lipoate-dependent enzymes. Lipoyl-ACP can also act as a substrate although octanoyl-ACP is likely to be the physiological substrate. In Caulobacter vibrioides (strain ATCC 19089 / CIP 103742 / CB 15) (Caulobacter crescentus), this protein is Octanoyltransferase.